We begin with the raw amino-acid sequence, 177 residues long: Large ribosomal subunit protein uL6 (177 aa).

The protein belongs to the universal ribosomal protein uL6 family. Part of the 50S ribosomal subunit.

Functionally, this protein binds to the 23S rRNA, and is important in its secondary structure. It is located near the subunit interface in the base of the L7/L12 stalk, and near the tRNA binding site of the peptidyltransferase center. The protein is Large ribosomal subunit protein uL6 of Cellvibrio japonicus (strain Ueda107) (Pseudomonas fluorescens subsp. cellulosa).